Reading from the N-terminus, the 347-residue chain is NADH-ubiquinone oxidoreductase chain 2 (347 aa).

Transmembrane regions (helical) follow at residues methionine 1–threonine 21, histidine 25–methionine 45, tyrosine 59–valine 79, isoleucine 96–proline 116, glycine 127–proline 147, isoleucine 149–glycine 169, isoleucine 178–proline 198, threonine 201–leucine 221, leucine 240–phenylalanine 260, aspartate 274–methionine 294, and isoleucine 326–leucine 346.

This sequence belongs to the complex I subunit 2 family. Core subunit of respiratory chain NADH dehydrogenase (Complex I) which is composed of 45 different subunits. Interacts with TMEM242.

The protein localises to the mitochondrion inner membrane. It carries out the reaction a ubiquinone + NADH + 5 H(+)(in) = a ubiquinol + NAD(+) + 4 H(+)(out). Functionally, core subunit of the mitochondrial membrane respiratory chain NADH dehydrogenase (Complex I) which catalyzes electron transfer from NADH through the respiratory chain, using ubiquinone as an electron acceptor. Essential for the catalytic activity and assembly of complex I. The protein is NADH-ubiquinone oxidoreductase chain 2 of Dobsonia minor (Lesser bare-backed fruit bat).